Consider the following 470-residue polypeptide: Acyltransferase BOA11 (470 aa).

His-156 serves as the catalytic Proton acceptor.

Belongs to the plant acyltransferase family.

Its pathway is polyketide biosynthesis. Its function is as follows. Acyltransferase; part of the gene cluster B that mediates the biosynthesis of botcinic acid and its botcinin derivatives, acetate-derived polyketides that contribute to virulence when combined with the sesquiterpene botrydial. Botcinic acid and its derivatives have been shown to induce chlorosis and necrosis during host plant infection, but also have antifungal activities. Two polyketide synthases, BOA6 and BOA9, are involved in the biosynthesis of botcinins. BOA6 mediates the formation of the per-methylated tetraketide core by condensation of four units of malonyl-CoA with one unit of acetyl-CoA, which would be methylated in activated methylene groups to yield a bicyclic acid intermediate that could then either be converted to botrylactone derivatives or lose the starter acetate unit through a retro-Claisen type C-C bond cleavage to yield botcinin derivatives. The second polyketide synthase, BOA9, is probably required for the biosynthesis of the tetraketide side chain of botcinins. The methyltransferase (MT) domain within BOA6 is probably responsible for the incorporation of four methyl groups. The trans-enoyl reductase BOA5 might take over the enoyl reductase function of BOA6 that misses an ER domain. The monooxygenases BOA2, BOA3 and BOA4 might be involved in further hydroxylations at C4, C5 and C8, whereas BOA7, close to BOA9, could potentially be involved in the hydroxylation at C4 in the side chain of botcinins. This Botryotinia fuckeliana (strain B05.10) (Noble rot fungus) protein is Acyltransferase BOA11.